The primary structure comprises 248 residues: Proteasome subunit alpha (248 aa).

N-acetylserine; partial is present on Ser2.

The protein belongs to the peptidase T1A family. As to quaternary structure, the 20S proteasome core is composed of 14 alpha and 14 beta subunits that assemble into four stacked heptameric rings, resulting in a barrel-shaped structure. The two inner rings, each composed of seven catalytic beta subunits, are sandwiched by two outer rings, each composed of seven alpha subunits. The catalytic chamber with the active sites is on the inside of the barrel. Has a gated structure, the ends of the cylinder being occluded by the N-termini of the alpha-subunits. Is capped by the proteasome-associated ATPase, ARC.

It localises to the cytoplasm. It functions in the pathway protein degradation; proteasomal Pup-dependent pathway. With respect to regulation, the formation of the proteasomal ATPase ARC-20S proteasome complex, likely via the docking of the C-termini of ARC into the intersubunit pockets in the alpha-rings, may trigger opening of the gate for substrate entry. Interconversion between the open-gate and close-gate conformations leads to a dynamic regulation of the 20S proteasome proteolysis activity. Component of the proteasome core, a large protease complex with broad specificity involved in protein degradation. The chain is Proteasome subunit alpha from Mycobacterium tuberculosis (strain CDC 1551 / Oshkosh).